We begin with the raw amino-acid sequence, 120 residues long: Dense granule protein 5 (120 aa).

Residues 1-25 form the signal peptide; that stretch reads MASVKRVVVAVMIVNVLALIFVGVA. A disordered region spans residues 27-59; it reads STRDVGSGGDDSEGARGREQQQVQQHEQNEDRS. The helical transmembrane segment at 76–93 threads the bilayer; sequence AVGLAAAVVAVVSLLRLL. A compositionally biased stretch (basic and acidic residues) spans 100-109; the sequence is AIQEESKESA. The disordered stretch occupies residues 100 to 120; that stretch reads AIQEESKESATAEEEEVAEEE. Residues 110-120 show a composition bias toward acidic residues; sequence TAEEEEVAEEE.

It localises to the secreted. Its subcellular location is the parasitophorous vacuole lumen. The protein localises to the parasitophorous vacuole membrane. It is found in the cytoplasmic vesicle. The protein resides in the secretory vesicle. Functionally, plays a role in the function of the cyst and parasitophorous vacuole membranes and therefore in host-parasite interactions. This Toxoplasma gondii protein is Dense granule protein 5 (GRA5).